The primary structure comprises 211 residues: Imidazole glycerol phosphate synthase subunit HisH (211 aa).

The 209-residue stretch at 3–211 (VVAVIDYEMG…VSQVREKIAA (209 aa)) folds into the Glutamine amidotransferase type-1 domain. Cys81 (nucleophile) is an active-site residue. Active-site residues include His186 and Glu188.

As to quaternary structure, heterodimer of HisH and HisF.

It localises to the cytoplasm. It catalyses the reaction 5-[(5-phospho-1-deoxy-D-ribulos-1-ylimino)methylamino]-1-(5-phospho-beta-D-ribosyl)imidazole-4-carboxamide + L-glutamine = D-erythro-1-(imidazol-4-yl)glycerol 3-phosphate + 5-amino-1-(5-phospho-beta-D-ribosyl)imidazole-4-carboxamide + L-glutamate + H(+). The catalysed reaction is L-glutamine + H2O = L-glutamate + NH4(+). The protein operates within amino-acid biosynthesis; L-histidine biosynthesis; L-histidine from 5-phospho-alpha-D-ribose 1-diphosphate: step 5/9. Functionally, IGPS catalyzes the conversion of PRFAR and glutamine to IGP, AICAR and glutamate. The HisH subunit catalyzes the hydrolysis of glutamine to glutamate and ammonia as part of the synthesis of IGP and AICAR. The resulting ammonia molecule is channeled to the active site of HisF. This chain is Imidazole glycerol phosphate synthase subunit HisH, found in Nostoc sp. (strain PCC 7120 / SAG 25.82 / UTEX 2576).